The chain runs to 902 residues: Respiratory burst oxidase homolog protein A (902 aa).

The Cytoplasmic portion of the chain corresponds to 1–344 (MMNRSEMQKL…KYFLFDNWKR (344 aa)). 2 disordered regions span residues 63-87 (KSPN…RSGR) and 107-130 (ASSV…RRSK). Over residues 74–87 (YEDQSLLRQGRSGR) the composition is skewed to polar residues. Low complexity predominate over residues 107–116 (ASSVSSSSAR). 2 EF-hand-like regions span residues 163 to 173 (TMTTNGLLHRS) and 198 to 209 (ENVSGDSININE). EF-hand domains lie at 221-256 (DFDS…SASA) and 265-300 (QADE…APMQ). Ca(2+) is bound by residues Asp234, Asp236, Asp238, Arg240, and Glu245. Ser311 and Ser315 each carry phosphoserine. A helical transmembrane segment spans residues 345-365 (VWVMALWIGAMAGLFTWKFME). The Extracellular portion of the chain corresponds to 366–380 (YRKRSAYEVMGVCVC). A helical membrane pass occupies residues 381 to 401 (IAKGAAETLKLNMAMILLPVC). Positions 383 to 540 (KGAAETLKLN…LFVIVYSLLV (158 aa)) constitute a Ferric oxidoreductase domain. The Cytoplasmic portion of the chain corresponds to 402 to 428 (RNTITWLRTKTKLSAIVPFDDSLNFHK). Residues 429 to 449 (VIAIGISVGVGIHATSHLACD) traverse the membrane as a helical segment. Topologically, residues 450-484 (FPRLIAADEDQYEPMEKYFGPQTKRYLDFVQSVEG) are extracellular. A helical transmembrane segment spans residues 485–505 (VTGIGMVVLMTIAFTLATTWF). The Cytoplasmic segment spans residues 506 to 529 (RRNKLNLPGPLKKITGFNAFWYSH). Residues 530-550 (HLFVIVYSLLVVHGFYVYLII) form a helical membrane-spanning segment. At 551-709 (EPWYKKTTWM…PAQDYKKFEV (159 aa)) the chain is on the extracellular side. The region spanning 575–703 (IRAFRSSVEA…DGPYGAPAQD (129 aa)) is the FAD-binding FR-type domain. Residues 710 to 730 (VLLVGLGIGATPMISIVSDII) form a helical membrane-spanning segment. Residues 731 to 902 (NNLKGVEEGS…TKFIFHKENF (172 aa)) lie on the Cytoplasmic side of the membrane. The interval 738 to 760 (EGSNRRQSPIHNMVTPPVSPSRK) is disordered.

The protein belongs to the RBOH (TC 5.B.1.3) family. Monomer and homodimer.

It is found in the membrane. Functionally, calcium-dependent NADPH oxidase that generates superoxide. This is Respiratory burst oxidase homolog protein A (RBOHA) from Arabidopsis thaliana (Mouse-ear cress).